A 396-amino-acid chain; its full sequence is Elongation factor Tu (396 aa).

Residues 10 to 206 enclose the tr-type G domain; sequence KPHVNVGTIG…ALDSFIPEPT (197 aa). Residues 19 to 26 are G1; it reads GHVDHGKT. 19-26 serves as a coordination point for GTP; it reads GHVDHGKT. Threonine 26 is a Mg(2+) binding site. A G2 region spans residues 60 to 64; the sequence is GITIS. The segment at 81–84 is G3; it reads DCPG. GTP contacts are provided by residues 81-85 and 136-139; these read DCPGH and NKAD. The tract at residues 136 to 139 is G4; it reads NKAD. Residues 174-176 form a G5 region; the sequence is SAR.

It belongs to the TRAFAC class translation factor GTPase superfamily. Classic translation factor GTPase family. EF-Tu/EF-1A subfamily. In terms of assembly, monomer.

It is found in the cytoplasm. The catalysed reaction is GTP + H2O = GDP + phosphate + H(+). GTP hydrolase that promotes the GTP-dependent binding of aminoacyl-tRNA to the A-site of ribosomes during protein biosynthesis. This chain is Elongation factor Tu, found in Xanthomonas euvesicatoria pv. vesicatoria (strain 85-10) (Xanthomonas campestris pv. vesicatoria).